Reading from the N-terminus, the 88-residue chain is Small ribosomal subunit protein uS15c (88 aa).

It belongs to the universal ribosomal protein uS15 family. As to quaternary structure, part of the 30S ribosomal subunit.

It is found in the plastid. The protein resides in the chloroplast. The sequence is that of Small ribosomal subunit protein uS15c (rps15) from Arabis hirsuta (Hairy rock-cress).